Consider the following 129-residue polypeptide: MAKEATRVRRRERKNISSGVVHINSTFNNTMITITDAQGNAIAWSSAGAQGFKGARKSTPFAAQVAAEDCARKAQEHGMRSLEVEVCGPGAGRESALRALQSVGFVITSIRDVTPIPHNGCRPRKRRRV.

Belongs to the universal ribosomal protein uS11 family. Part of the 30S ribosomal subunit. Interacts with proteins S7 and S18. Binds to IF-3.

Located on the platform of the 30S subunit, it bridges several disparate RNA helices of the 16S rRNA. Forms part of the Shine-Dalgarno cleft in the 70S ribosome. The protein is Small ribosomal subunit protein uS11 of Bartonella tribocorum (strain CIP 105476 / IBS 506).